A 363-amino-acid polypeptide reads, in one-letter code: Probable dual-specificity RNA methyltransferase RlmN (363 aa).

Glu106 (proton acceptor) is an active-site residue. In terms of domain architecture, Radical SAM core spans 112-345 (HEYGNSVCVT…VTIRREQGHD (234 aa)). A disulfide bond links Cys119 and Cys350. Positions 126, 130, and 133 each coordinate [4Fe-4S] cluster. S-adenosyl-L-methionine-binding positions include 176 to 177 (GE), Ser208, 231 to 233 (SLH), and Asn307. The active-site S-methylcysteine intermediate is Cys350.

This sequence belongs to the radical SAM superfamily. RlmN family. Requires [4Fe-4S] cluster as cofactor.

It is found in the cytoplasm. The catalysed reaction is adenosine(2503) in 23S rRNA + 2 reduced [2Fe-2S]-[ferredoxin] + 2 S-adenosyl-L-methionine = 2-methyladenosine(2503) in 23S rRNA + 5'-deoxyadenosine + L-methionine + 2 oxidized [2Fe-2S]-[ferredoxin] + S-adenosyl-L-homocysteine. The enzyme catalyses adenosine(37) in tRNA + 2 reduced [2Fe-2S]-[ferredoxin] + 2 S-adenosyl-L-methionine = 2-methyladenosine(37) in tRNA + 5'-deoxyadenosine + L-methionine + 2 oxidized [2Fe-2S]-[ferredoxin] + S-adenosyl-L-homocysteine. Functionally, specifically methylates position 2 of adenine 2503 in 23S rRNA and position 2 of adenine 37 in tRNAs. This chain is Probable dual-specificity RNA methyltransferase RlmN, found in Bacillus subtilis (strain 168).